The chain runs to 140 residues: Oocyte-expressed protein homolog (140 aa).

The region spanning 40 to 101 (PLVFFLEAWL…AVQRQVKSVL (62 aa)) is the KH; atypical domain.

This sequence belongs to the KHDC1 family. As to quaternary structure, component of the subcortical maternal complex (SCMC), at least composed of NLRP5, KHDC3, OOEP, and TLE6. Within the complex, interacts with NLRP5, KHDC3 and TLE6. As part of the SCMC interacts with the SCMC-associated protein NLRP4F. The SCMC may facilitate translocation of its components between the nuclear and cytoplasmic compartments. Forms a scaffold complex with KHDC3/FILIA, and interacts with BLM and TRIM25 at DNA replication forks.

The protein resides in the cytoplasm. It localises to the nucleus. Component of the subcortical maternal complex (SCMC), a multiprotein complex that plays a key role in early embryonic development. The SCMC complex is a structural constituent of cytoplasmic lattices, which consist in fibrous structures found in the cytoplasm of oocytes and preimplantation embryos. They are required to store maternal proteins critical for embryonic development, such as proteins that control epigenetic reprogramming of the preimplantation embryo, and prevent their degradation or activation. As part of the OOEP-KHDC3 scaffold, recruits BLM and TRIM25 to DNA replication forks, thereby promoting the ubiquitination of BLM by TRIM25, enhancing BLM retainment at replication forks and therefore promoting stalled replication fork restart. Positively regulates the homologous recombination-mediated DNA double-strand break (DSB) repair pathway by regulating ATM activation and RAD51 recruitment to DSBs in oocytes. Thereby contributes to oocyte survival and the resumption and completion of meiosis. The sequence is that of Oocyte-expressed protein homolog (OOEP) from Bos taurus (Bovine).